The following is a 101-amino-acid chain: DNA-binding protein Fis (101 aa).

Residues 77-96 constitute a DNA-binding region (H-T-H motif); that stretch reads QTRAANMLGINRGTLRKKLK.

Belongs to the transcriptional regulatory Fis family. In terms of assembly, homodimer.

Its function is as follows. Activates ribosomal RNA transcription. Plays a direct role in upstream activation of rRNA promoters. This Shewanella frigidimarina (strain NCIMB 400) protein is DNA-binding protein Fis.